The chain runs to 456 residues: Exodeoxyribonuclease 7 large subunit (456 aa).

Belongs to the XseA family. As to quaternary structure, heterooligomer composed of large and small subunits.

The protein localises to the cytoplasm. It catalyses the reaction Exonucleolytic cleavage in either 5'- to 3'- or 3'- to 5'-direction to yield nucleoside 5'-phosphates.. In terms of biological role, bidirectionally degrades single-stranded DNA into large acid-insoluble oligonucleotides, which are then degraded further into small acid-soluble oligonucleotides. The protein is Exodeoxyribonuclease 7 large subunit of Erwinia tasmaniensis (strain DSM 17950 / CFBP 7177 / CIP 109463 / NCPPB 4357 / Et1/99).